Reading from the N-terminus, the 246-residue chain is Ribonuclease PH (246 aa).

Phosphate-binding positions include arginine 91 and 129–131 (GTR).

This sequence belongs to the RNase PH family. In terms of assembly, homohexameric ring arranged as a trimer of dimers.

The catalysed reaction is tRNA(n+1) + phosphate = tRNA(n) + a ribonucleoside 5'-diphosphate. In terms of biological role, phosphorolytic 3'-5' exoribonuclease that plays an important role in tRNA 3'-end maturation. Removes nucleotide residues following the 3'-CCA terminus of tRNAs; can also add nucleotides to the ends of RNA molecules by using nucleoside diphosphates as substrates, but this may not be physiologically important. Probably plays a role in initiation of 16S rRNA degradation (leading to ribosome degradation) during starvation. This is Ribonuclease PH from Burkholderia ambifaria (strain MC40-6).